We begin with the raw amino-acid sequence, 116 residues long: uncharacterized protein (116 aa).

The helical transmembrane segment at L22–V42 threads the bilayer.

The protein localises to the membrane. This is an uncharacterized protein from Saccharomyces cerevisiae (strain ATCC 204508 / S288c) (Baker's yeast).